The following is a 502-amino-acid chain: Probable cytosol aminopeptidase (502 aa).

2 residues coordinate Mn(2+): Lys254 and Asp259. Lys266 is a catalytic residue. Mn(2+) is bound by residues Asp277, Asp336, and Glu338. Residue Arg340 is part of the active site.

It belongs to the peptidase M17 family. It depends on Mn(2+) as a cofactor.

Its subcellular location is the cytoplasm. The catalysed reaction is Release of an N-terminal amino acid, Xaa-|-Yaa-, in which Xaa is preferably Leu, but may be other amino acids including Pro although not Arg or Lys, and Yaa may be Pro. Amino acid amides and methyl esters are also readily hydrolyzed, but rates on arylamides are exceedingly low.. It carries out the reaction Release of an N-terminal amino acid, preferentially leucine, but not glutamic or aspartic acids.. Functionally, presumably involved in the processing and regular turnover of intracellular proteins. Catalyzes the removal of unsubstituted N-terminal amino acids from various peptides. This chain is Probable cytosol aminopeptidase, found in Tropheryma whipplei (strain TW08/27) (Whipple's bacillus).